A 479-amino-acid chain; its full sequence is 6-phosphogluconate dehydrogenase, decarboxylating (479 aa).

NADP(+) contacts are provided by residues 10–15 (GLAVMG), 33–35 (NRS), 75–77 (IKA), and Asn-103. Residues Asn-103 and 129–131 (SGG) contribute to the substrate site. Residue Lys-183 is the Proton acceptor of the active site. 186–187 (HN) contacts substrate. Glu-190 (proton donor) is an active-site residue. Residues Tyr-191, Lys-260, Arg-287, Arg-447, and His-453 each coordinate substrate.

Belongs to the 6-phosphogluconate dehydrogenase family. As to quaternary structure, homodimer.

It catalyses the reaction 6-phospho-D-gluconate + NADP(+) = D-ribulose 5-phosphate + CO2 + NADPH. Its pathway is carbohydrate degradation; pentose phosphate pathway; D-ribulose 5-phosphate from D-glucose 6-phosphate (oxidative stage): step 3/3. Catalyzes the oxidative decarboxylation of 6-phosphogluconate to ribulose 5-phosphate and CO(2), with concomitant reduction of NADP to NADPH. The sequence is that of 6-phosphogluconate dehydrogenase, decarboxylating (gnd) from Chlamydia muridarum (strain MoPn / Nigg).